The following is a 207-amino-acid chain: Keratin-associated protein 27-1 (207 aa).

The tract at residues 184–207 (QLLESSPGVEPTCCVTGGSQLPSK) is disordered.

This sequence belongs to the PMG family. In terms of assembly, interacts with hair keratins.

In the hair cortex, hair keratin intermediate filaments are embedded in an interfilamentous matrix, consisting of hair keratin-associated proteins (KRTAP), which are essential for the formation of a rigid and resistant hair shaft through their extensive disulfide bond cross-linking with abundant cysteine residues of hair keratins. The matrix proteins include the high-sulfur and high-glycine-tyrosine keratins. This Homo sapiens (Human) protein is Keratin-associated protein 27-1 (KRTAP27-1).